A 704-amino-acid chain; its full sequence is Elongation factor G (704 aa).

Residues 8–290 (ARYRNIGISA…AVIDYLPSPV (283 aa)) enclose the tr-type G domain. GTP-binding positions include 17-24 (AHIDAGKT), 88-92 (DTPGH), and 142-145 (NKMD).

Belongs to the TRAFAC class translation factor GTPase superfamily. Classic translation factor GTPase family. EF-G/EF-2 subfamily.

The protein resides in the cytoplasm. Its function is as follows. Catalyzes the GTP-dependent ribosomal translocation step during translation elongation. During this step, the ribosome changes from the pre-translocational (PRE) to the post-translocational (POST) state as the newly formed A-site-bound peptidyl-tRNA and P-site-bound deacylated tRNA move to the P and E sites, respectively. Catalyzes the coordinated movement of the two tRNA molecules, the mRNA and conformational changes in the ribosome. This chain is Elongation factor G, found in Cronobacter sakazakii (strain ATCC BAA-894) (Enterobacter sakazakii).